A 1804-amino-acid chain; its full sequence is Obscurin-like protein 1 (1804 aa).

A Phosphoserine modification is found at serine 10. Ig-like domains are found at residues 12–100 (PCFL…AAVT), 128–225 (PKFL…ALLQ), 241–330 (PKPV…QTLS), and 339–425 (PRLR…ANVT). Positions 17-19 (FPR) are interaction with TTN. An intrachain disulfide couples cysteine 33 to cysteine 84. Residues 85-94 (RARNAAGEAY) form an interaction with TTN region. Cysteine 149 and cysteine 209 are disulfide-bonded. The segment at 227–249 (HQPRESPPQDPDENPKPVLEPLK) is disordered. Intrachain disulfides connect cysteine 267/cysteine 319 and cysteine 362/cysteine 412. The Fibronectin type-III domain occupies 517-615 (PPGPPVMVEM…FNGSAHLVPT (99 aa)). Ig-like domains follow at residues 720-800 (PQDK…FGVT), 804-891 (PPVH…FTVT), 902-982 (PSSE…FTIT), 986-1075 (PPVR…VTVT), 1078-1165 (PERI…FNVS), 1176-1261 (PEAA…FNVQ), 1266-1442 (PPVK…ARLS), 1536-1621 (PVTI…ARLT), 1625-1694 (REVS…EDTG), and 1702-1798 (PAQS…ADTQ). 8 disulfide bridges follow: cysteine 738–cysteine 788, cysteine 829–cysteine 879, cysteine 920–cysteine 970, cysteine 1011–cysteine 1061, cysteine 1103–cysteine 1153, cysteine 1195–cysteine 1245, cysteine 1289–cysteine 1430, and cysteine 1558–cysteine 1608.

Component of the 3M complex, composed of core components CUL7, CCDC8 and OBSL1. Interacts with CCDC8. Interacts with CUL7; the interaction is direct. Interacts with FBXW8. Interacts (via N-terminal Ig-like domain) with TTN/titin (via C-terminal Ig-like domain); the interaction is direct.

It localises to the cytoplasm. The protein localises to the perinuclear region. Its subcellular location is the golgi apparatus. In terms of biological role, core component of the 3M complex, a complex required to regulate microtubule dynamics and genome integrity. It is unclear how the 3M complex regulates microtubules, it could act by controlling the level of a microtubule stabilizer. Acts as a regulator of the Cul7-RING(FBXW8) ubiquitin-protein ligase, playing a critical role in the ubiquitin ligase pathway that regulates Golgi morphogenesis and dendrite patterning in brain. Required to localize CUL7 to the Golgi apparatus in neurons. In Mus musculus (Mouse), this protein is Obscurin-like protein 1 (Obsl1).